A 450-amino-acid polypeptide reads, in one-letter code: 23S rRNA (uracil(1939)-C(5))-methyltransferase RlmD (450 aa).

Residues 12 to 70 (SKQLSAKLSLSVNQLDHLGAGIAQHQGKVVFIPGALPDETVTVQLTEQKKNYARAKLIK) form the TRAM domain. Positions 83, 89, 92, and 171 each coordinate [4Fe-4S] cluster. Residues Gln283, Phe312, Asn317, Glu333, Asp360, and Asp380 each contribute to the S-adenosyl-L-methionine site. Catalysis depends on Cys406, which acts as the Nucleophile.

This sequence belongs to the class I-like SAM-binding methyltransferase superfamily. RNA M5U methyltransferase family. RlmD subfamily.

It carries out the reaction uridine(1939) in 23S rRNA + S-adenosyl-L-methionine = 5-methyluridine(1939) in 23S rRNA + S-adenosyl-L-homocysteine + H(+). In terms of biological role, catalyzes the formation of 5-methyl-uridine at position 1939 (m5U1939) in 23S rRNA. This chain is 23S rRNA (uracil(1939)-C(5))-methyltransferase RlmD, found in Shewanella baltica (strain OS195).